The primary structure comprises 187 residues: Elongation factor P (187 aa).

The protein belongs to the elongation factor P family.

Its subcellular location is the cytoplasm. Its pathway is protein biosynthesis; polypeptide chain elongation. Functionally, involved in peptide bond synthesis. Stimulates efficient translation and peptide-bond synthesis on native or reconstituted 70S ribosomes in vitro. Probably functions indirectly by altering the affinity of the ribosome for aminoacyl-tRNA, thus increasing their reactivity as acceptors for peptidyl transferase. This chain is Elongation factor P, found in Rhodococcus erythropolis (strain PR4 / NBRC 100887).